An 88-amino-acid polypeptide reads, in one-letter code: Large ribosomal subunit protein bL27 (88 aa).

Positions 1–13 (MATKKGASSSSNG) are enriched in polar residues. The disordered stretch occupies residues 1–23 (MATKKGASSSSNGRDSEAKRLGV).

This sequence belongs to the bacterial ribosomal protein bL27 family.

The polypeptide is Large ribosomal subunit protein bL27 (Corynebacterium urealyticum (strain ATCC 43042 / DSM 7109)).